The following is a 409-amino-acid chain: uncharacterized protein (409 aa).

The N-terminal stretch at 1 to 39 is a signal peptide; sequence MVSDSKLELPLPVNQQKPRRRRILKVHLLIAALILSAVG. 5 residues coordinate Zn(2+): His67, Asp69, Glu181, His250, and His271.

It belongs to the metallo-dependent hydrolases superfamily. Peptidase M19 family. In terms of assembly, interacts with dil1. It depends on Zn(2+) as a cofactor.

The catalysed reaction is an L-aminoacyl-L-amino acid + H2O = 2 an L-alpha-amino acid. This is an uncharacterized protein from Schizosaccharomyces pombe (strain 972 / ATCC 24843) (Fission yeast).